The following is a 1330-amino-acid chain: Pre-mRNA-splicing factor CWC22 homolog (1330 aa).

The interval 1-377 (MGESDAESDS…AAKITERQRK (377 aa)) is disordered. Low complexity predominate over residues 9-36 (DSSSNSSSSDTSSGSDSDARSESSSSES). Over residues 46 to 94 (QEESAKDAKKTDDTDRGEKRAKERDAGQDEQPTEQKKTPAAEPRSERQH) the composition is skewed to basic and acidic residues. Positions 99–113 (AGVEKQQEEAVAAAE) are enriched in low complexity. Residues 115–135 (ESEKLNEAKKVETPVQRKEEA) show a composition bias toward basic and acidic residues. Positions 138–148 (SSVTKELNSPK) are enriched in polar residues. Positions 149 to 166 (AQEENAARELEERRKDEE) are enriched in basic and acidic residues. Positions 168–177 (PVTTNGSSKE) are enriched in polar residues. Thr-191 and Thr-201 each carry phosphothreonine. 2 stretches are compositionally biased toward basic and acidic residues: residues 191–201 (TADHIEEGEIT) and 208–236 (LPTK…SPDG). Phosphoserine occurs at positions 219 and 221. The span at 252 to 277 (SRRRRRSRSKGSRTRSRSKSPIRRRS) shows a compositional bias: basic residues. 2 stretches are compositionally biased toward basic and acidic residues: residues 278–307 (NSLE…EREK) and 316–325 (SSRRRDDSRE). The span at 355 to 366 (TETNADNETVTE) shows a compositional bias: low complexity. Positions 420-603 (KKSIHGYINK…EVLFQIRKDG (184 aa)) constitute an MIF4G domain. The segment at 660-697 (REILGSDDGSSSGSGSGSDSDSDSDGESGSDAEKKAEA) is disordered. The span at 665 to 678 (SDDGSSSGSGSGSD) shows a compositional bias: low complexity. Acidic residues predominate over residues 679–689 (SDSDSDGESGS). The region spanning 710–826 (ALRRTIYLTI…SWDVLECIQL (117 aa)) is the MI domain. The interval 926-1330 (FRDGSAPAGN…RSSRRSKGRS (405 aa)) is disordered. The span at 941–951 (SSSSSSSSSSD) shows a compositional bias: low complexity. Residues 952–963 (TDSEDSSEEDSS) show a composition bias toward acidic residues. Over residues 964 to 976 (SDSSSESSSSDSS) the composition is skewed to low complexity. Over residues 980 to 1012 (KKKRKRKDKDKKKSKKATKEKSKKTKNKKKKKK) the composition is skewed to basic residues. Residues 1013 to 1033 (AEKEQEKEKEKQRKSKKEKEK) are compositionally biased toward basic and acidic residues. The span at 1034-1054 (DKKRKKEEKKAAKKKSKHRRK) shows a compositional bias: basic residues. Residues 1072–1082 (SESSDSSNSSS) are compositionally biased toward low complexity. A compositionally biased stretch (basic and acidic residues) spans 1089 to 1110 (PQAKIKRQEHVEKNKFRGRTQD). A Phosphothreonine modification is found at Thr-1108. A phosphoserine mark is found at Ser-1111, Ser-1121, Ser-1180, and Ser-1181. 2 stretches are compositionally biased toward basic and acidic residues: residues 1133-1195 (RRRD…VAHD) and 1203-1320 (SRSY…SRRE). Position 1182 is a phosphotyrosine (Tyr-1182). The segment covering 1321 to 1330 (RSSRRSKGRS) has biased composition (basic residues).

The protein belongs to the CWC22 family. Component of the spliceosome C complex. Interacts with eIF4AIII.

It localises to the nucleus speckle. Its function is as follows. Required for pre-mRNA splicing and for exon-junction complex (EJC) assembly. Hinders eIF4AIII from non-specifically binding RNA and escorts it to the splicing machinery to promote EJC assembly on mature mRNAs. The chain is Pre-mRNA-splicing factor CWC22 homolog (ncm) from Drosophila melanogaster (Fruit fly).